The following is a 327-amino-acid chain: Urokinase plasminogen activator surface receptor (327 aa).

The first 23 residues, 1-23 (MGLPRRLLLLLLLATTCVPASQG), serve as a signal peptide directing secretion. UPAR/Ly6 domains lie at 24 to 117 (LQCM…GRYL), 117 to 212 (LECA…PPNG), and 213 to 298 (FQCY…SPTG). 3 disulfide bridges follow: Cys26-Cys47, Cys29-Cys35, and Cys40-Cys68. Residue Asn32 is glycosylated (N-linked (GlcNAc...) asparagine). Residue Asn75 is glycosylated (N-linked (GlcNAc...) asparagine). Cystine bridges form between Cys94–Cys99, Cys119–Cys146, Cys122–Cys129, Cys139–Cys168, Cys174–Cys191, Cys192–Cys197, Cys215–Cys243, Cys218–Cys226, Cys236–Cys262, Cys268–Cys287, and Cys288–Cys293. N-linked (GlcNAc...) asparagine glycans are attached at residues Asn183, Asn193, Asn221, Asn254, and Asn282. Gly298 is lipidated: GPI-anchor amidated glycine. Residues 299–327 (GAPRPGPAQLSLIASLLLTLGLWGVLLWT) constitute a propeptide, removed in mature form.

In terms of assembly, monomer. Interacts (via the UPAR/Ly6 domains) with SRPX2. Interacts with MRC2. Interacts with SORL1 (via N-terminal ectodomain); this interaction decreases PLAUR internalization. The ternary complex composed of PLAUR-PLAU-SERPINE1 also interacts with SORL1. Interacts with CD82; this interaction prevents PLAUR from binding to its high affinity ligand PLAU. In terms of tissue distribution, expressed in angiogenic endothelial cells (at protein level).

It localises to the cell membrane. The protein resides in the secreted. Functionally, acts as a receptor for urokinase plasminogen activator. Plays a role in localizing and promoting plasmin formation. Mediates the proteolysis-independent signal transduction activation effects of U-PA. This is Urokinase plasminogen activator surface receptor (Plaur) from Mus musculus (Mouse).